The sequence spans 466 residues: Soluble pyridine nucleotide transhydrogenase (466 aa).

36–45 contributes to the FAD binding site; that stretch reads ERYQNVGGGC.

The protein belongs to the class-I pyridine nucleotide-disulfide oxidoreductase family. As to quaternary structure, homooligomer; probable homooctamer. FAD is required as a cofactor.

It is found in the cytoplasm. The enzyme catalyses NAD(+) + NADPH = NADH + NADP(+). Conversion of NADPH, generated by peripheral catabolic pathways, to NADH, which can enter the respiratory chain for energy generation. In Escherichia coli O157:H7, this protein is Soluble pyridine nucleotide transhydrogenase.